A 314-amino-acid chain; its full sequence is Altered inheritance of mitochondria protein 6 homolog ARB_06966 (314 aa).

The signal sequence occupies residues 1-21; it reads MKSSILASAAILAASLEPVAA. N-linked (GlcNAc...) asparagine glycosylation is found at N91 and N184.

It belongs to the AIM6 family.

Its subcellular location is the secreted. The chain is Altered inheritance of mitochondria protein 6 homolog ARB_06966 from Arthroderma benhamiae (strain ATCC MYA-4681 / CBS 112371) (Trichophyton mentagrophytes).